Consider the following 373-residue polypeptide: MSEKKINLLDLDRKAMRALFADLGEKPFRADQLMKWIYHFGVSDFEEMTNINKVLRQKLAARCEIVAPEISSYQKSADGTIKFAIHVGEGQEVETVYIPEDDRATLCVSSQVGCALECTFCSTAQQGFNRNLTVSEIVGQIWRVSHFLGFAKDTGERPITNVVMMGMGEPLLNLANVIPAMDIMLDDFGFSLSKRRVTLSTSGVVPALDKLGDALDVALAVSIHAPNDELRDILVPVNKKYPLQEFLAGIRRYIAKSNANRGRVTVEYVMLDHINDSTEQAHELAQLMKDTPCKVNLIPFNPYPGSPYGRSSNSRIDRFSKVLMEYGLTVIVRKTRGDDIDAACGQLAGDIRDRTKRLAKKRMQENQISVTMN.

The active-site Proton acceptor is the Glu94. Positions 100 to 339 (EDDRATLCVS…VIVRKTRGDD (240 aa)) constitute a Radical SAM core domain. Cys107 and Cys344 are joined by a disulfide. [4Fe-4S] cluster contacts are provided by Cys114, Cys118, and Cys121. S-adenosyl-L-methionine contacts are provided by residues 168–169 (GE), Ser200, 222–224 (SIH), and Asn301. The active-site S-methylcysteine intermediate is Cys344.

Belongs to the radical SAM superfamily. RlmN family. Requires [4Fe-4S] cluster as cofactor.

It localises to the cytoplasm. The enzyme catalyses adenosine(2503) in 23S rRNA + 2 reduced [2Fe-2S]-[ferredoxin] + 2 S-adenosyl-L-methionine = 2-methyladenosine(2503) in 23S rRNA + 5'-deoxyadenosine + L-methionine + 2 oxidized [2Fe-2S]-[ferredoxin] + S-adenosyl-L-homocysteine. It carries out the reaction adenosine(37) in tRNA + 2 reduced [2Fe-2S]-[ferredoxin] + 2 S-adenosyl-L-methionine = 2-methyladenosine(37) in tRNA + 5'-deoxyadenosine + L-methionine + 2 oxidized [2Fe-2S]-[ferredoxin] + S-adenosyl-L-homocysteine. Its function is as follows. Specifically methylates position 2 of adenine 2503 in 23S rRNA and position 2 of adenine 37 in tRNAs. m2A2503 modification seems to play a crucial role in the proofreading step occurring at the peptidyl transferase center and thus would serve to optimize ribosomal fidelity. The sequence is that of Dual-specificity RNA methyltransferase RlmN from Shewanella sp. (strain MR-4).